We begin with the raw amino-acid sequence, 743 residues long: Merozoite surface protein 9 (743 aa).

Positions 1 to 23 (MMNMKIVLFSLLLFVIRWNIISC) are cleaved as a signal peptide. The tract at residues 77–235 (KELLKEKQYT…VNDEDDVNDE (159 aa)) is interaction with MSP1 and host SLC4A1/Band 3. Disordered regions lie at residues 202-282 (KSQG…ATAY), 459-487 (DNQA…PTED), 512-540 (NNTP…ENFD), and 666-743 (VDAL…EESK). The span at 211 to 224 (SQNQNENNDNQKYQ) shows a compositional bias: polar residues. 8 repeat units span residues 226 to 231 (VNDEDD), 232 to 237 (VNDEED), 238 to 243 (TNDDED), 244 to 249 (TNDEED), 250 to 255 (TNDDED), 256 to 261 (TNDDED), 262 to 267 (TNDEED), and 268 to 273 (TNDEED). The interval 226–273 (VNDEDDVNDEEDTNDDEDTNDEEDTNDDEDTNDDEDTNDEEDTNDEED) is 8 X 6 AA tandem repeats of [VT]-N-D-[ED]-[ED]-D. A compositionally biased stretch (acidic residues) spans 226 to 274 (VNDEDDVNDEEDTNDDEDTNDEEDTNDDEDTNDDEDTNDEEDTNDEEDH). The segment at 364–528 (LKDNLINYEF…PPTQSKKKNK (165 aa)) is interaction with MSP1 and host SLC4A1/Band 3. The segment covering 459-473 (DNQAVDTKSMEEPKV) has biased composition (basic and acidic residues). The segment covering 512 to 521 (NNTPNVVPPT) has biased composition (low complexity). Residues 644–732 (NQETEEEMEK…EEQEEEEEEI (89 aa)) adopt a coiled-coil conformation. Over residues 672 to 722 (KNKEEEEKEKEKEKEKEEKEKEEKEKEEKEKEKEEKEKEKEEKEEEKKEKE) the composition is skewed to basic and acidic residues. Residues 723 to 733 (EEQEEEEEEIV) show a composition bias toward acidic residues.

The protein belongs to the plasmodium ABRA family. In terms of assembly, forms a complex composed of MSP1, MSP6, MSP7, MSP9 and MSP3; within the complex, MSP6 and MSP9 mediate the binding to the host erythrocyte. Interacts with MSP1 subunits p19 and p42; the interaction is direct. Interacts with host SLC4A1/Band 3 protein (via the 5ABC region). MSP1 subunits p19 or p42, and MSP9 form a co-ligand complex that interacts with host SLC4A1/Band 3 protein. In terms of processing, not glycosylated.

It is found in the cell membrane. Its subcellular location is the parasitophorous vacuole lumen. The protein resides in the secreted. During the asexual blood stage, involved in the sialic acid-independent (SAID) merozoite invasion of host erythrocytes by binding to host SLC4A1/Band 3 protein on the surface of the host erythrocyte. This Plasmodium falciparum (isolate Camp / Malaysia) protein is Merozoite surface protein 9.